The chain runs to 344 residues: Ion-translocating oxidoreductase complex subunit D (344 aa).

4 helical membrane passes run 23–43 (LVLG…GPGT), 44–64 (LLNL…MLAL), 77–99 (SALV…WLTL), and 120–140 (PFNP…LEMT). An FMN phosphoryl threonine modification is found at threonine 172. The next 5 helical transmembrane spans lie at 198–218 (LGSA…LFLL), 222–242 (LFTW…SLLF), 252–272 (GSPL…FIVT), 285–305 (LVFG…GGYP), and 306–326 (DGMA…DYYT).

This sequence belongs to the NqrB/RnfD family. In terms of assembly, the complex is composed of six subunits: RnfA, RnfB, RnfC, RnfD, RnfE and RnfG. It depends on FMN as a cofactor.

Its subcellular location is the cell inner membrane. Its function is as follows. Part of a membrane-bound complex that couples electron transfer with translocation of ions across the membrane. The polypeptide is Ion-translocating oxidoreductase complex subunit D (Pseudomonas aeruginosa (strain LESB58)).